The following is a 219-amino-acid chain: Uracil-DNA glycosylase (219 aa).

The active-site Proton acceptor is Asp-61.

It belongs to the uracil-DNA glycosylase (UDG) superfamily. UNG family.

The protein localises to the cytoplasm. The enzyme catalyses Hydrolyzes single-stranded DNA or mismatched double-stranded DNA and polynucleotides, releasing free uracil.. Its function is as follows. Excises uracil residues from the DNA which can arise as a result of misincorporation of dUMP residues by DNA polymerase or due to deamination of cytosine. The sequence is that of Uracil-DNA glycosylase from Exiguobacterium sibiricum (strain DSM 17290 / CCUG 55495 / CIP 109462 / JCM 13490 / 255-15).